A 209-amino-acid polypeptide reads, in one-letter code: UPF0174 protein HP_1587 (209 aa).

Belongs to the UPF0174 family.

This Helicobacter pylori (strain ATCC 700392 / 26695) (Campylobacter pylori) protein is UPF0174 protein HP_1587.